The chain runs to 349 residues: DNA replication and repair protein RecF (349 aa).

30–37 contacts ATP; that stretch reads GKNGSGKT.

Belongs to the RecF family.

The protein resides in the cytoplasm. In terms of biological role, the RecF protein is involved in DNA metabolism; it is required for DNA replication and normal SOS inducibility. RecF binds preferentially to single-stranded, linear DNA. It also seems to bind ATP. This chain is DNA replication and repair protein RecF, found in Francisella tularensis subsp. tularensis (strain FSC 198).